Reading from the N-terminus, the 358-residue chain is DNA-directed RNA polymerase subunit alpha (358 aa).

Residues 1 to 231 (MIQNVTDDKI…NIFLSLSNSS (231 aa)) are alpha N-terminal domain (alpha-NTD). The alpha C-terminal domain (alpha-CTD) stretch occupies residues 266-358 (QESLGWKKIS…LELINNKDIS (93 aa)).

This sequence belongs to the RNA polymerase alpha chain family. As to quaternary structure, in plastids the minimal PEP RNA polymerase catalytic core is composed of four subunits: alpha, beta, beta', and beta''. When a (nuclear-encoded) sigma factor is associated with the core the holoenzyme is formed, which can initiate transcription.

The protein localises to the plastid. The protein resides in the chloroplast. The enzyme catalyses RNA(n) + a ribonucleoside 5'-triphosphate = RNA(n+1) + diphosphate. DNA-dependent RNA polymerase catalyzes the transcription of DNA into RNA using the four ribonucleoside triphosphates as substrates. This Chara vulgaris (Common stonewort) protein is DNA-directed RNA polymerase subunit alpha.